The chain runs to 298 residues: ADP/ATP translocase 3 (298 aa).

Position 1 is an N-acetylmethionine (Met-1). The Mitochondrial intermembrane portion of the chain corresponds to 1-7 (MTEQAIS). At Thr-2 the chain carries N-acetylthreonine; in ADP/ATP translocase 3, N-terminally processed. One copy of the Solcar 1 repeat lies at 6–98 (ISFAKDFLAG…FAFKDKYKQI (93 aa)). The chain crosses the membrane as a helical span at residues 8-37 (FAKDFLAGGIAAAISKTAVAPIERVKLLLQ). At 38–74 (VQHASKQIAADKQYKGIVDCIVRIPKEQGVLSFWRGN) the chain is on the mitochondrial matrix side. N6,N6,N6-trimethyllysine is present on Lys-52. The helical transmembrane segment at 75-99 (LANVIRYFPTQALNFAFKDKYKQIF) threads the bilayer. 2 residues coordinate ADP: Arg-80 and Lys-92. Topologically, residues 100 to 109 (LGGVDKRTQF) are mitochondrial intermembrane. Lys-105 is modified (N6-acetyllysine). Residues 110–130 (WRYFAGNLASGGAAGATSLCF) form a helical membrane-spanning segment. Solcar repeat units lie at residues 111–201 (RYFA…AKGM) and 212–297 (VSWM…LKKV). Residues 131–178 (VYPLDFARTRLAADVGKSGSEREFRGLGDCLVKITKSDGIRGLYQGFN) are Mitochondrial matrix-facing. The helical transmembrane segment at 179 to 199 (VSVQGIIIYRAAYFGIYDTAK) threads the bilayer. The Mitochondrial intermembrane segment spans residues 200 to 210 (GMLPDPKNTHI). The helical transmembrane segment at 211 to 231 (VVSWMIAQTVTAVAGVVSYPF) threads the bilayer. Over 232-273 (DTVRRRMMMQSGRKGADIMYKGTVDCWRKILKDEGGKAFFKG) the chain is Mitochondrial matrix. An ADP-binding site is contributed by Arg-235. Residues 235-240 (RRRMMM) are important for transport activity. A Nucleotide carrier signature motif motif is present at residues 235–240 (RRRMMM). An N6-acetyllysine modification is found at Lys-268. A helical transmembrane segment spans residues 274 to 291 (AWSNVLRGMGGAFVLVLY). Over 292-298 (DELKKVI) the chain is Mitochondrial intermembrane.

It belongs to the mitochondrial carrier (TC 2.A.29) family. As to quaternary structure, monomer. Found in a complex with ARL2, ARL2BP and SLC25A6/ANT3. In terms of processing, trimethylated by ANTKMT at Lys-52.

It localises to the mitochondrion inner membrane. It is found in the membrane. The catalysed reaction is ADP(in) + ATP(out) = ADP(out) + ATP(in). It catalyses the reaction H(+)(in) = H(+)(out). The matrix-open state (m-state) is inhibited by the membrane-permeable bongkrekic acid (BKA). The cytoplasmic-open state (c-state) is inhibited by the membrane-impermeable toxic inhibitor carboxyatractyloside (CATR). Proton transporter activity is inhibited by ADP:ATP antiporter activity. ADP:ATP antiporter that mediates import of ADP into the mitochondrial matrix for ATP synthesis, and export of ATP out to fuel the cell. Cycles between the cytoplasmic-open state (c-state) and the matrix-open state (m-state): operates by the alternating access mechanism with a single substrate-binding site intermittently exposed to either the cytosolic (c-state) or matrix (m-state) side of the inner mitochondrial membrane. In addition to its ADP:ATP antiporter activity, also involved in mitochondrial uncoupling and mitochondrial permeability transition pore (mPTP) activity. Plays a role in mitochondrial uncoupling by acting as a proton transporter: proton transport uncouples the proton flows via the electron transport chain and ATP synthase to reduce the efficiency of ATP production and cause mitochondrial thermogenesis. Proton transporter activity is inhibited by ADP:ATP antiporter activity, suggesting that SLC25A6/ANT3 acts as a master regulator of mitochondrial energy output by maintaining a delicate balance between ATP production (ADP:ATP antiporter activity) and thermogenesis (proton transporter activity). Proton transporter activity requires free fatty acids as cofactor, but does not transport it. Also plays a key role in mPTP opening, a non-specific pore that enables free passage of the mitochondrial membranes to solutes of up to 1.5 kDa, and which contributes to cell death. It is however unclear if SLC25A6/ANT3 constitutes a pore-forming component of mPTP or regulates it. The chain is ADP/ATP translocase 3 from Bos taurus (Bovine).